The chain runs to 464 residues: Secretion-regulating guanine nucleotide exchange factor (464 aa).

RCC1 repeat units follow at residues 14 to 66, 68 to 118, 119 to 170, 172 to 229, 230 to 282, 283 to 349, and 350 to 401; these read AAAL…VVTD, GSLF…ILTE, NGQV…AATA, GTVF…SLTD, AGEL…AQTV, TGKV…LAVI, and GGVC…ALCQ. A compositionally biased stretch (basic and acidic residues) spans 301–313; that stretch reads VETREGWESEKQD. The disordered stretch occupies residues 301–323; it reads VETREGWESEKQDPSLPGSGPQK. Positions 411-464 are disordered; sequence HPSVTSPSPDATKEARSQEAMEQERNQKERHAETSPQAQSDRFRNGGLVAETLE. A compositionally biased stretch (basic and acidic residues) spans 421–443; the sequence is ATKEARSQEAMEQERNQKERHAE. Phosphoserine is present on serine 427.

In terms of assembly, interacts with SEC5. The interaction occurs only in the presence of magnesium or manganese and is stimulated by dCTP or GTP.

It localises to the cytoplasm. The protein localises to the nucleus. Functionally, probable guanine nucleotide exchange factor (GEF), which may be involved in the secretion process. The protein is Secretion-regulating guanine nucleotide exchange factor (SERGEF) of Bos taurus (Bovine).